The primary structure comprises 491 residues: Cobyric acid synthase (491 aa).

The region spanning 246 to 432 (RKLIACPILP…VHGLLADAEL (187 aa)) is the GATase cobBQ-type domain. C328 functions as the Nucleophile in the catalytic mechanism. H424 is an active-site residue.

It belongs to the CobB/CobQ family. CobQ subfamily.

Its pathway is cofactor biosynthesis; adenosylcobalamin biosynthesis. Catalyzes amidations at positions B, D, E, and G on adenosylcobyrinic A,C-diamide. NH(2) groups are provided by glutamine, and one molecule of ATP is hydrogenolyzed for each amidation. This Novosphingobium aromaticivorans (strain ATCC 700278 / DSM 12444 / CCUG 56034 / CIP 105152 / NBRC 16084 / F199) protein is Cobyric acid synthase.